We begin with the raw amino-acid sequence, 342 residues long: Trans-enoyl reductase himH (342 aa).

46-49 (TDWK) provides a ligand contact to NADP(+). 133 to 140 (LSVSTAAS) is a binding site for substrate. NADP(+) contacts are provided by residues 168–171 (SSSV), 191–194 (SQAN), 255–256 (VM), and 329–330 (VS).

The protein belongs to the zinc-containing alcohol dehydrogenase family. As to quaternary structure, monomer.

It participates in secondary metabolite biosynthesis. Trans-enoyl reductase; part of the him gene cluster that mediates the biosynthesis of himeic acid A, a ubiquitin-activating enzyme (E1) inhibitor. First, himA, together with the trans-enoyl reductase himH, catalyzes the formation of apolyketide chain, which is then condensed with leucine by the NRPS activity of himA. Dieckmann cyclization and release from himA gives a tetramic acid intermediate as the product of himA PKS-NRPS. HimG then catalyzes alpha-oxidation of the tetramic acid ring, with a subsequent rearrangement to yield apyrone intermediate. Two terminal methyl groups of polyketide and amide side chains are oxidized to carboxylic acids by himC cytochrome P450 monooxygenase to form himeic acid A. Himeic acid A is further converted to himeic acid B and C during culture growth. No gene responsible for pyrone to pyridone conversion was found in the him gene cluster and himeic acid A is non-enzymatically converted to himeic acid C by the incorporation of an ammonium nitrogen atom in a pH5 buffer, and to himeic acid B at a conversion ratio of 50% during incubation in MeOH for 5 days. This chain is Trans-enoyl reductase himH, found in Aspergillus japonicus.